A 137-amino-acid polypeptide reads, in one-letter code: NADH-quinone oxidoreductase subunit A (137 aa).

The next 3 membrane-spanning stretches (helical) occupy residues 12-32, 68-88, and 94-114; these read WAFA…LGVS, LVAM…AWAV, and GWVG…GLVY.

The protein belongs to the complex I subunit 3 family. In terms of assembly, NDH-1 is composed of 13 different subunits. Subunits NuoA, H, J, K, L, M, N constitute the membrane sector of the complex.

It localises to the cell inner membrane. It catalyses the reaction a quinone + NADH + 5 H(+)(in) = a quinol + NAD(+) + 4 H(+)(out). In terms of biological role, NDH-1 shuttles electrons from NADH, via FMN and iron-sulfur (Fe-S) centers, to quinones in the respiratory chain. The immediate electron acceptor for the enzyme in this species is believed to be ubiquinone. Couples the redox reaction to proton translocation (for every two electrons transferred, four hydrogen ions are translocated across the cytoplasmic membrane), and thus conserves the redox energy in a proton gradient. This chain is NADH-quinone oxidoreductase subunit A, found in Ectopseudomonas mendocina (strain ymp) (Pseudomonas mendocina).